Here is a 273-residue protein sequence, read N- to C-terminus: Undecaprenyl-diphosphatase (273 aa).

The next 8 membrane-spanning stretches (helical) occupy residues 3–23, 47–67, 90–110, 120–140, 148–168, 186–206, 217–237, and 249–269; these read IILW…EFLP, ALDA…WQDI, LLLG…LLKL, IIAT…QWGS, IGIL…LPGA, PTAA…ATLV, LLIP…LAIA, and WVFI…IALG.

Belongs to the UppP family.

It is found in the cell inner membrane. It catalyses the reaction di-trans,octa-cis-undecaprenyl diphosphate + H2O = di-trans,octa-cis-undecaprenyl phosphate + phosphate + H(+). Its function is as follows. Catalyzes the dephosphorylation of undecaprenyl diphosphate (UPP). Confers resistance to bacitracin. The chain is Undecaprenyl-diphosphatase from Thermosynechococcus vestitus (strain NIES-2133 / IAM M-273 / BP-1).